Reading from the N-terminus, the 81-residue chain is Sulfur carrier protein TusA (81 aa).

Catalysis depends on Cys-19, which acts as the Cysteine persulfide intermediate.

This sequence belongs to the sulfur carrier protein TusA family.

Its subcellular location is the cytoplasm. Sulfur carrier protein which probably makes part of a sulfur-relay system. The sequence is that of Sulfur carrier protein TusA from Shewanella oneidensis (strain ATCC 700550 / JCM 31522 / CIP 106686 / LMG 19005 / NCIMB 14063 / MR-1).